Here is a 136-residue protein sequence, read N- to C-terminus: Large ribosomal subunit protein uL22 (136 aa).

The protein belongs to the universal ribosomal protein uL22 family. In terms of assembly, part of the 50S ribosomal subunit.

In terms of biological role, this protein binds specifically to 23S rRNA; its binding is stimulated by other ribosomal proteins, e.g. L4, L17, and L20. It is important during the early stages of 50S assembly. It makes multiple contacts with different domains of the 23S rRNA in the assembled 50S subunit and ribosome. Its function is as follows. The globular domain of the protein is located near the polypeptide exit tunnel on the outside of the subunit, while an extended beta-hairpin is found that lines the wall of the exit tunnel in the center of the 70S ribosome. The chain is Large ribosomal subunit protein uL22 from Bacteroides thetaiotaomicron (strain ATCC 29148 / DSM 2079 / JCM 5827 / CCUG 10774 / NCTC 10582 / VPI-5482 / E50).